Here is a 270-residue protein sequence, read N- to C-terminus: Urease accessory protein UreD (270 aa).

It belongs to the UreD family. As to quaternary structure, ureD, UreF and UreG form a complex that acts as a GTP-hydrolysis-dependent molecular chaperone, activating the urease apoprotein by helping to assemble the nickel containing metallocenter of UreC. The UreE protein probably delivers the nickel.

The protein localises to the cytoplasm. Required for maturation of urease via the functional incorporation of the urease nickel metallocenter. In Actinobacillus pleuropneumoniae serotype 3 (strain JL03), this protein is Urease accessory protein UreD.